Consider the following 1029-residue polypeptide: Chitin synthase 3 (1029 aa).

The interval 1–29 is disordered; that stretch reads MAYYSRPASAGAARAQDDQDPYPYYPDPD. The N-linked (GlcNAc...) asparagine glycan is linked to asparagine 37. A compositionally biased stretch (low complexity) spans 46–71; sequence ASGAASSASHTSPFSDAHAASASPAS. Disordered regions lie at residues 46 to 105 and 168 to 209; these read ASGA…SRMP and LAHR…AGTS. Residues 76–91 are compositionally biased toward polar residues; that stretch reads SHQQVSAHAPQQQHMS. A compositionally biased stretch (basic and acidic residues) spans 191 to 202; the sequence is AHDEKYAYDRPD. N-linked (GlcNAc...) asparagine glycosylation is found at asparagine 401, asparagine 514, asparagine 527, and asparagine 689. The next 7 membrane-spanning stretches (helical) occupy residues 723 to 743, 760 to 780, 796 to 816, 830 to 850, 860 to 880, 963 to 983, and 998 to 1018; these read FYSFVNMCFAWFGLANYYIFF, IGVFNVFMQYIYLGTVVSSFI, AAVVVFALLTVYMMVAAVLCL, AQMVVSLLATYGVYLISSLLA, FLQYLLLAPTYINILNIYAFC, VVLAWALSNGVLAAFILNGDA, and VYMVLVLIFVAGMACIRFIGS.

The protein belongs to the chitin synthase family. Class I subfamily.

The protein localises to the cell membrane. Its subcellular location is the cytoplasmic vesicle membrane. The enzyme catalyses [(1-&gt;4)-N-acetyl-beta-D-glucosaminyl](n) + UDP-N-acetyl-alpha-D-glucosamine = [(1-&gt;4)-N-acetyl-beta-D-glucosaminyl](n+1) + UDP + H(+). Polymerizes chitin, a structural polymer of the cell wall and septum, by transferring the sugar moiety of UDP-GlcNAc to the non-reducing end of the growing chitin polymer. The sequence is that of Chitin synthase 3 from Mycosarcoma maydis (Corn smut fungus).